A 163-amino-acid polypeptide reads, in one-letter code: Nucleotide-binding protein Tery_2743 (163 aa).

It belongs to the YajQ family.

Functionally, nucleotide-binding protein. In Trichodesmium erythraeum (strain IMS101), this protein is Nucleotide-binding protein Tery_2743.